Here is a 371-residue protein sequence, read N- to C-terminus: Ferrochelatase (371 aa).

Positions 218 and 299 each coordinate Fe cation.

Belongs to the ferrochelatase family.

The protein resides in the cytoplasm. The catalysed reaction is heme b + 2 H(+) = protoporphyrin IX + Fe(2+). It participates in porphyrin-containing compound metabolism; protoheme biosynthesis; protoheme from protoporphyrin-IX: step 1/1. Functionally, catalyzes the ferrous insertion into protoporphyrin IX. The protein is Ferrochelatase of Cupriavidus taiwanensis (strain DSM 17343 / BCRC 17206 / CCUG 44338 / CIP 107171 / LMG 19424 / R1) (Ralstonia taiwanensis (strain LMG 19424)).